A 337-amino-acid chain; its full sequence is Eukaryotic translation initiation factor 3 subunit H (337 aa).

The region spanning 21 to 153 is the MPN domain; sequence VQCDGLAVMK…LKAYRLTPQA (133 aa).

Belongs to the eIF-3 subunit H family. Component of the eukaryotic translation initiation factor 3 (eIF-3) complex. The eIF-3 complex interacts with pix. Interacts with mxt.

The protein resides in the cytoplasm. In terms of biological role, component of the eukaryotic translation initiation factor 3 (eIF-3) complex, which is involved in protein synthesis of a specialized repertoire of mRNAs and, together with other initiation factors, stimulates binding of mRNA and methionyl-tRNAi to the 40S ribosome. The eIF-3 complex specifically targets and initiates translation of a subset of mRNAs involved in cell proliferation. The sequence is that of Eukaryotic translation initiation factor 3 subunit H from Drosophila ananassae (Fruit fly).